The sequence spans 305 residues: MENSQLCKLFIGGLNVQTSESGLRGHFEAFGTLTDCVVVVNPQTKRSRCFGFVTYSNVEEADAAMAASPHAVDGNTVELKRAVSREDSARPGAHAKVKKLFVGGLKGDVAEGDLIEHFSQFGTVEKAEIIADKQSGKKRGFGFVYFQNHDAADKAAVVKFHPIQGHRVEVKKAVPKEDIYSGGGGGGSRSSRGGRGGRGRGGGRDQNGLSKGGGGGYNSYGGYGGGGGGGYNAYGGGGGGSSYGGSDYGNGFGGFGSYSQHQSSYGPMKSGGGGGGGGSSWGGRSNSGPYRGGYGGGGGYGGSSF.

An N-acetylmethionine modification is found at Met1. The region spanning 7–86 is the RRM 1 domain; the sequence is CKLFIGGLNV…VELKRAVSRE (80 aa). Position 68 is a phosphoserine (Ser68). Lys80 is covalently cross-linked (Glycyl lysine isopeptide (Lys-Gly) (interchain with G-Cter in SUMO2)). At Ser84 the chain carries Phosphoserine; by MAPKAPK2. Residues Lys96, Lys98, Lys99, and Lys106 each participate in a glycyl lysine isopeptide (Lys-Gly) (interchain with G-Cter in SUMO2) cross-link. The 78-residue stretch at 98-175 folds into the RRM 2 domain; it reads KKLFVGGLKG…HRVEVKKAVP (78 aa). N6-acetyllysine is present on Lys133. Residue Arg139 is modified to Omega-N-methylarginine. Residues Lys154, Lys159, Lys172, and Lys176 each participate in a glycyl lysine isopeptide (Lys-Gly) (interchain with G-Cter in SUMO2) cross-link. Disordered regions lie at residues 174–214 and 262–305; these read VPKE…KGGG and QSSY…GSSF. Composition is skewed to gly residues over residues 181–200 and 269–281; these read SGGG…GRGR and KSGG…GSSW. Phosphoserine is present on Ser188. Arg284 is modified (omega-N-methylarginine). Gly residues predominate over residues 290–305; the sequence is YRGGYGGGGGYGGSSF. Asymmetric dimethylarginine; alternate is present on Arg291. The residue at position 291 (Arg291) is a Dimethylated arginine; alternate. Residue Arg291 is modified to Omega-N-methylarginine; alternate.

Phosphorylated at Ser-84 by MAPKAPK2 in response to LPS treatment, promoting stabilization of GADD45A mRNA. In terms of processing, arg-291 is dimethylated, probably to asymmetric dimethylarginine.

The protein localises to the nucleus. Its function is as follows. mRNA-binding component of ribonucleosomes. Specifically binds AU-rich element (ARE)-containing mRNAs. Involved in post-transcriptional regulation of cytokines mRNAs. This Homo sapiens (Human) protein is Heterogeneous nuclear ribonucleoprotein A0 (HNRNPA0).